Consider the following 284-residue polypeptide: Tropomyosin (284 aa).

A coiled-coil region spans residues 1 to 284 (MDAIKKKMVA…DATFAELAGY (284 aa)). Residues 32 to 41 (TEEAKAKIED) are compositionally biased toward basic and acidic residues. Residues 32 to 60 (TEEAKAKIEDDYNSLQKKSIQTENDLDNT) form a disordered region. The span at 44 to 60 (NSLQKKSIQTENDLDNT) shows a compositional bias: polar residues.

This sequence belongs to the tropomyosin family. In terms of assembly, homodimer.

Its function is as follows. Tropomyosin, in association with the troponin complex, plays a central role in the calcium dependent regulation of muscle contraction. The chain is Tropomyosin from Mytilus edulis (Blue mussel).